The primary structure comprises 223 residues: Peptidyl-tRNA hydrolase (223 aa).

Tyr14 contacts tRNA. His19 serves as the catalytic Proton acceptor. 3 residues coordinate tRNA: Tyr64, Asn66, and Asn112. Residues 183-223 (MNVRNTRPKPGKRQKGEGDGSTDPAPAAKEGKGPLPPTQKP) form a disordered region.

Belongs to the PTH family. As to quaternary structure, monomer.

It is found in the cytoplasm. The enzyme catalyses an N-acyl-L-alpha-aminoacyl-tRNA + H2O = an N-acyl-L-amino acid + a tRNA + H(+). In terms of biological role, hydrolyzes ribosome-free peptidyl-tRNAs (with 1 or more amino acids incorporated), which drop off the ribosome during protein synthesis, or as a result of ribosome stalling. Functionally, catalyzes the release of premature peptidyl moieties from peptidyl-tRNA molecules trapped in stalled 50S ribosomal subunits, and thus maintains levels of free tRNAs and 50S ribosomes. The sequence is that of Peptidyl-tRNA hydrolase from Sorangium cellulosum (strain So ce56) (Polyangium cellulosum (strain So ce56)).